A 161-amino-acid polypeptide reads, in one-letter code: Endoribonuclease YbeY (161 aa).

Residues His127, His131, and His137 each coordinate Zn(2+).

It belongs to the endoribonuclease YbeY family. It depends on Zn(2+) as a cofactor.

It localises to the cytoplasm. Single strand-specific metallo-endoribonuclease involved in late-stage 70S ribosome quality control and in maturation of the 3' terminus of the 16S rRNA. The polypeptide is Endoribonuclease YbeY (Listeria monocytogenes serotype 4a (strain HCC23)).